The primary structure comprises 200 residues: MNLNTASGGTVTVSEVAFGKDFNEPLVHQVVTAFLAGARQGSKAQKNRSDVSGGGRKPWRQKGTGRARAGTIRSPIWRGGGKTFAAVPRDHSQKVNRKMYRGALQCIMSELVRQERLVVVDEFTVDSPKTKAVAAKLKGMELTSVLIVTDNVDENLFMASRNLPKVDVRDSQGVDPVSLIAFEKVLITVPALKKLEEALA.

A disordered region spans residues 42-69 (SKAQKNRSDVSGGGRKPWRQKGTGRARA).

Belongs to the universal ribosomal protein uL4 family. Part of the 50S ribosomal subunit.

One of the primary rRNA binding proteins, this protein initially binds near the 5'-end of the 23S rRNA. It is important during the early stages of 50S assembly. It makes multiple contacts with different domains of the 23S rRNA in the assembled 50S subunit and ribosome. Its function is as follows. Forms part of the polypeptide exit tunnel. The chain is Large ribosomal subunit protein uL4 from Alcanivorax borkumensis (strain ATCC 700651 / DSM 11573 / NCIMB 13689 / SK2).